The following is a 720-amino-acid chain: Phosphoribosylformylglycinamidine synthase subunit PurL (720 aa).

His34 is a catalytic residue. Tyr37 contacts ATP. Glu83 lines the Mg(2+) pocket. Substrate contacts are provided by residues 84–87 (SHNH) and Arg106. Residue His85 is the Proton acceptor of the active site. A Mg(2+)-binding site is contributed by Asp107. Residue Gln231 participates in substrate binding. A Mg(2+)-binding site is contributed by Asp259. 303-305 (ESQ) serves as a coordination point for substrate. The ATP site is built by Asp480 and Gly517. Asn518 is a Mg(2+) binding site. Ser520 contacts substrate.

It belongs to the FGAMS family. Monomer. Part of the FGAM synthase complex composed of 1 PurL, 1 PurQ and 2 PurS subunits.

The protein localises to the cytoplasm. The catalysed reaction is N(2)-formyl-N(1)-(5-phospho-beta-D-ribosyl)glycinamide + L-glutamine + ATP + H2O = 2-formamido-N(1)-(5-O-phospho-beta-D-ribosyl)acetamidine + L-glutamate + ADP + phosphate + H(+). Its pathway is purine metabolism; IMP biosynthesis via de novo pathway; 5-amino-1-(5-phospho-D-ribosyl)imidazole from N(2)-formyl-N(1)-(5-phospho-D-ribosyl)glycinamide: step 1/2. Its function is as follows. Part of the phosphoribosylformylglycinamidine synthase complex involved in the purines biosynthetic pathway. Catalyzes the ATP-dependent conversion of formylglycinamide ribonucleotide (FGAR) and glutamine to yield formylglycinamidine ribonucleotide (FGAM) and glutamate. The FGAM synthase complex is composed of three subunits. PurQ produces an ammonia molecule by converting glutamine to glutamate. PurL transfers the ammonia molecule to FGAR to form FGAM in an ATP-dependent manner. PurS interacts with PurQ and PurL and is thought to assist in the transfer of the ammonia molecule from PurQ to PurL. This is Phosphoribosylformylglycinamidine synthase subunit PurL from Haloarcula marismortui (strain ATCC 43049 / DSM 3752 / JCM 8966 / VKM B-1809) (Halobacterium marismortui).